Reading from the N-terminus, the 100-residue chain is Large ribosomal subunit protein bL21 (100 aa).

The protein belongs to the bacterial ribosomal protein bL21 family. Part of the 50S ribosomal subunit. Contacts protein L20.

In terms of biological role, this protein binds to 23S rRNA in the presence of protein L20. This is Large ribosomal subunit protein bL21 from Mycoplasmopsis synoviae (strain 53) (Mycoplasma synoviae).